The following is a 91-amino-acid chain: Tityustoxin-19 (91 aa).

Positions 1–25 are cleaved as a signal peptide; it reads MVATNRCCVFALLFALLLVHSLTEA. The 34-residue stretch at 58 to 91 folds into the BetaSPN-type CS-alpha/beta domain; the sequence is EYACPAIDKFCEDHCAAKKAVGKCDDFKCNCIKL. 3 cysteine pairs are disulfide-bonded: cysteine 61-cysteine 81, cysteine 68-cysteine 86, and cysteine 72-cysteine 88.

The protein belongs to the long chain scorpion toxin family. Class 2 subfamily. In terms of tissue distribution, expressed by the venom gland.

It localises to the secreted. May function as a voltage-gated potassium channel blocker and may have cytolytic activity. Is often not detected in the tested venom fractions, suggesting that the toxin is likely subject to frequent processing within the venom. Its function is as follows. Specific and reversible blocker of the potassium channel Kv1.2/KCNA2 (IC(50)=544 nM). Functionally, shows cytolytic effects on erythrocytes and induces non-selective pore formation when high concentrations (300 nM) are applied on oocytes. In terms of biological role, does not cause hemolysis, mast cell degranulation, LDH release, and does not have antimicrobial activity. Does not cause edema and pain. This chain is Tityustoxin-19, found in Tityus serrulatus (Brazilian scorpion).